The chain runs to 1110 residues: Guanylate cyclase 2D (1110 aa).

The first 66 residues, Met-1–Ala-66, serve as a signal peptide directing secretion. Residues Arg-67–Gln-475 lie on the Extracellular side of the membrane. A disulfide bond links Cys-121 and Cys-149. N-linked (GlcNAc...) asparagine glycans are attached at residues Asn-304 and Asn-374. The helical transmembrane segment at Pro-476–Ile-500 threads the bilayer. Topologically, residues Arg-501–Gly-1110 are cytoplasmic. The segment at Thr-529 to Ile-556 is disordered. The Protein kinase domain maps to Ser-541–Phe-818. The interaction with NCALD stretch occupies residues Met-880–Leu-921. Residues Thr-893 to Glu-1023 form the Guanylate cyclase domain.

It belongs to the adenylyl cyclase class-4/guanylyl cyclase family. Interacts (via the catalytic domain) with NCALD. As to expression, specifically expressed in a subpopulation of olfactory sensory neurons. Expressed in the cilia of the olfactory epithelium.

It localises to the cell projection. It is found in the cilium membrane. The catalysed reaction is GTP = 3',5'-cyclic GMP + diphosphate. Activated by Ca(2+). Activated by NCALD in a Ca(2+)-dependent fashion. Functions as an olfactory receptor activated by a urine odorant, uroguanylin. Activated as well by the volatile semiochemicals carbon disulfide (CS2) and carbon dioxide (CO2). Has guanylate cyclase activity upon binding of the ligand. Activation of GUCY2D neurons leads to the cGMP-dependent activation of the CNGA3 channels, membrane depolarization and an increase in action potential frequency. Signaling pathways activated by GUCY2D may trigger social behaviors such as acquisition of food preference. The polypeptide is Guanylate cyclase 2D (Gucy2d) (Rattus norvegicus (Rat)).